The chain runs to 154 residues: UPF0178 protein Gbem_2221 (154 aa).

This sequence belongs to the UPF0178 family.

This chain is UPF0178 protein Gbem_2221, found in Citrifermentans bemidjiense (strain ATCC BAA-1014 / DSM 16622 / JCM 12645 / Bem) (Geobacter bemidjiensis).